The chain runs to 381 residues: tRNA-specific 2-thiouridylase MnmA (381 aa).

ATP contacts are provided by residues 9 to 16 (GMSGGVDS) and Met-35. An interaction with target base in tRNA region spans residues 95-97 (NPD). The Nucleophile role is filled by Cys-100. Cys-100 and Cys-196 form a disulfide bridge. Gly-124 is an ATP binding site. Residues 146 to 148 (KDQ) form an interaction with tRNA region. Cys-196 (cysteine persulfide intermediate) is an active-site residue. The segment at 308-309 (RY) is interaction with tRNA.

This sequence belongs to the MnmA/TRMU family.

The protein resides in the cytoplasm. The catalysed reaction is S-sulfanyl-L-cysteinyl-[protein] + uridine(34) in tRNA + AH2 + ATP = 2-thiouridine(34) in tRNA + L-cysteinyl-[protein] + A + AMP + diphosphate + H(+). Its function is as follows. Catalyzes the 2-thiolation of uridine at the wobble position (U34) of tRNA, leading to the formation of s(2)U34. This Paraburkholderia xenovorans (strain LB400) protein is tRNA-specific 2-thiouridylase MnmA.